A 544-amino-acid polypeptide reads, in one-letter code: Ell-associated factor Eaf (544 aa).

The segment at 147–544 is disordered; sequence QSVPMNMGHQ…LSSNSSDDDD (398 aa). Over residues 193-202 the composition is skewed to basic and acidic residues; it reads SSKDKVDFKP. Ser205 bears the Phosphoserine mark. Over residues 264-273 the composition is skewed to low complexity; that stretch reads SGSSTGSSSG. The span at 287–299 shows a compositional bias: basic residues; that stretch reads GKQRQAHGKRQQI. Composition is skewed to low complexity over residues 305 to 319, 333 to 374, and 396 to 407; these read PPVQ…QQQP, QPHP…QQRP, and ASQSVAQAAAVL. Over residues 425–440 the composition is skewed to acidic residues; the sequence is DSSDSDSGSDSDDSTE. Composition is skewed to low complexity over residues 450 to 483, 503 to 513, and 526 to 544; these read EQQQ…HMNQ, QQPQPQPQQQQ, and NDLL…DDDD.

It belongs to the EAF family.

The protein resides in the nucleus. Its function is as follows. Promotes transcriptional elongation by Su(Tpl)/ELL. Essential for development. This chain is Ell-associated factor Eaf, found in Drosophila persimilis (Fruit fly).